The primary structure comprises 339 residues: Phenylalanine--tRNA ligase alpha subunit (339 aa).

Mg(2+) is bound at residue Glu-253.

Belongs to the class-II aminoacyl-tRNA synthetase family. Phe-tRNA synthetase alpha subunit type 1 subfamily. Tetramer of two alpha and two beta subunits. Mg(2+) serves as cofactor.

It localises to the cytoplasm. It catalyses the reaction tRNA(Phe) + L-phenylalanine + ATP = L-phenylalanyl-tRNA(Phe) + AMP + diphosphate + H(+). In Alcanivorax borkumensis (strain ATCC 700651 / DSM 11573 / NCIMB 13689 / SK2), this protein is Phenylalanine--tRNA ligase alpha subunit.